The primary structure comprises 557 residues: Potassium-transporting ATPase potassium-binding subunit (557 aa).

12 consecutive transmembrane segments (helical) span residues 5–25 (GFLLIATFLLVLMVLARPLGS), 63–83 (LCAILGLNMLGLAVLFFMLLG), 132–152 (GLTVQNFLSAASGIAVIFALI), 170–190 (LLRITLWVLVPVALLIALFFI), 253–273 (FVQMLAIFLIPTALCFAFGEV), 283–303 (LLWAMSVIFVICVGVVMWAEV), 329–349 (VLVSSLFAVVTTAASCGAVIA), 356–376 (ALGGMVPMWLMQIGEVVFGGV), 379–399 (GLYGMMLFVLLAVFIAGLMIG), 416–436 (LTALAILVTPTLVLMGAALAM), 484–504 (LLAFCMFVGRFGVIIPVMAIA), and 526–546 (LFVGLLIGTVLLVGALTFIPA).

The protein belongs to the KdpA family. The system is composed of three essential subunits: KdpA, KdpB and KdpC.

Its subcellular location is the cell inner membrane. Its function is as follows. Part of the high-affinity ATP-driven potassium transport (or Kdp) system, which catalyzes the hydrolysis of ATP coupled with the electrogenic transport of potassium into the cytoplasm. This subunit binds the periplasmic potassium ions and delivers the ions to the membrane domain of KdpB through an intramembrane tunnel. The chain is Potassium-transporting ATPase potassium-binding subunit from Escherichia coli O17:K52:H18 (strain UMN026 / ExPEC).